Consider the following 226-residue polypeptide: Phosphoribosyl-dephospho-CoA transferase (226 aa).

Active-site residues include aspartate 148 and aspartate 150.

It belongs to the MdcG family.

The enzyme catalyses apo-[malonate decarboxylase ACP] + 2'-(5''-triphospho-alpha-D-ribosyl)-3'-dephospho-CoA = holo-[malonate decarboxylase ACP] + diphosphate. Transfers 2'-(5-triphosphoribosyl)-3'-dephosphocoenzyme-A to the apo-[acyl-carrier-protein] of the malonate decarboxylase to yield holo-[acyl-carrier-protein]. This is Phosphoribosyl-dephospho-CoA transferase from Bradyrhizobium diazoefficiens (strain JCM 10833 / BCRC 13528 / IAM 13628 / NBRC 14792 / USDA 110).